A 164-amino-acid polypeptide reads, in one-letter code: UPF0114 protein KPN78578_33570 (164 aa).

Helical transmembrane passes span 15–35 (LLAP…IKFF), 53–73 (MILT…LVMV), 109–126 (VAAS…RVFM), and 136–156 (LMWY…MGYL).

It belongs to the UPF0114 family.

It is found in the cell membrane. This Klebsiella pneumoniae subsp. pneumoniae (strain ATCC 700721 / MGH 78578) protein is UPF0114 protein KPN78578_33570.